A 244-amino-acid polypeptide reads, in one-letter code: Extracellular superoxide dismutase [Cu-Zn] (244 aa).

An N-terminal signal peptide occupies residues 1-18 (MLALVCSCLLLAALPADT). 2 cysteine pairs are disulfide-bonded: cysteine 67–cysteine 212 and cysteine 129–cysteine 211. The N-linked (GlcNAc...) asparagine glycan is linked to asparagine 111. 3 residues coordinate Cu cation: histidine 118, histidine 120, and histidine 135. Zn(2+) is bound by residues histidine 135, histidine 143, histidine 146, and aspartate 149. Histidine 185 contacts Cu cation. The interval 221 to 244 (PWARQAQEHAERKKRRRESECKAA) is disordered. The span at 226–244 (AQEHAERKKRRRESECKAA) shows a compositional bias: basic and acidic residues.

Belongs to the Cu-Zn superoxide dismutase family. Homotetramer. Directly interacts with ATP7A; this interaction is copper-dependent and is required for SOD3 activity. It depends on Cu cation as a cofactor. Zn(2+) serves as cofactor.

It localises to the secreted. The protein localises to the extracellular space. The protein resides in the golgi apparatus. It is found in the trans-Golgi network. It catalyses the reaction 2 superoxide + 2 H(+) = H2O2 + O2. Protect the extracellular space from toxic effect of reactive oxygen intermediates by converting superoxide radicals into hydrogen peroxide and oxygen. The protein is Extracellular superoxide dismutase [Cu-Zn] (SOD3) of Oryctolagus cuniculus (Rabbit).